We begin with the raw amino-acid sequence, 291 residues long: uncharacterized protein (291 aa).

The HTH tetR-type domain maps to 2–62 (KEKEKLIIET…SMLNYYYDKT (61 aa)). Positions 25 to 44 (SVQEIAKECKISKGAFYIYF) form a DNA-binding region, H-T-H motif.

This is an uncharacterized protein from Bacillus subtilis (strain 168).